The chain runs to 469 residues: 3-isopropylmalate dehydratase large subunit (469 aa).

[4Fe-4S] cluster is bound by residues Cys-349, Cys-410, and Cys-413.

It belongs to the aconitase/IPM isomerase family. LeuC type 1 subfamily. In terms of assembly, heterodimer of LeuC and LeuD. Requires [4Fe-4S] cluster as cofactor.

It carries out the reaction (2R,3S)-3-isopropylmalate = (2S)-2-isopropylmalate. It participates in amino-acid biosynthesis; L-leucine biosynthesis; L-leucine from 3-methyl-2-oxobutanoate: step 2/4. In terms of biological role, catalyzes the isomerization between 2-isopropylmalate and 3-isopropylmalate, via the formation of 2-isopropylmaleate. This chain is 3-isopropylmalate dehydratase large subunit, found in Aromatoleum aromaticum (strain DSM 19018 / LMG 30748 / EbN1) (Azoarcus sp. (strain EbN1)).